The following is a 328-amino-acid chain: Alanine racemase (328 aa).

Residue K33 is the Proton acceptor; specific for D-alanine of the active site. K33 carries the post-translational modification N6-(pyridoxal phosphate)lysine. R118 lines the substrate pocket. The active-site Proton acceptor; specific for L-alanine is Y237. Residue M283 participates in substrate binding.

Belongs to the alanine racemase family. Pyridoxal 5'-phosphate is required as a cofactor.

The enzyme catalyses L-alanine = D-alanine. Its pathway is amino-acid biosynthesis; D-alanine biosynthesis; D-alanine from L-alanine: step 1/1. Catalyzes the interconversion of L-alanine and D-alanine. May also act on other amino acids. The sequence is that of Alanine racemase (alr) from Campylobacter jejuni subsp. jejuni serotype O:6 (strain 81116 / NCTC 11828).